Here is a 239-residue protein sequence, read N- to C-terminus: Ribonuclease PH (239 aa).

Residues R86 and 124–126 (GTR) each bind phosphate.

The protein belongs to the RNase PH family. In terms of assembly, homohexameric ring arranged as a trimer of dimers.

It carries out the reaction tRNA(n+1) + phosphate = tRNA(n) + a ribonucleoside 5'-diphosphate. Its function is as follows. Phosphorolytic 3'-5' exoribonuclease that plays an important role in tRNA 3'-end maturation. Removes nucleotide residues following the 3'-CCA terminus of tRNAs; can also add nucleotides to the ends of RNA molecules by using nucleoside diphosphates as substrates, but this may not be physiologically important. Probably plays a role in initiation of 16S rRNA degradation (leading to ribosome degradation) during starvation. In Anaeromyxobacter dehalogenans (strain 2CP-1 / ATCC BAA-258), this protein is Ribonuclease PH.